Consider the following 242-residue polypeptide: Probable 2-phosphosulfolactate phosphatase (242 aa).

Belongs to the ComB family. Mg(2+) is required as a cofactor.

The enzyme catalyses (2R)-O-phospho-3-sulfolactate + H2O = (2R)-3-sulfolactate + phosphate. The protein is Probable 2-phosphosulfolactate phosphatase of Caldicellulosiruptor saccharolyticus (strain ATCC 43494 / DSM 8903 / Tp8T 6331).